Consider the following 231-residue polypeptide: Elongation factor 1-delta 1 (231 aa).

N-acetylalanine is present on A2. Residues 10–73 (DAGLKKLDEH…LRISGVSAEG (64 aa)) form the GST C-terminal domain. Disordered stretches follow at residues 85–108 (TEEA…EDDD) and 116–135 (ETEE…KAST). The span at 119 to 129 (EEKKAAEERAA) shows a compositional bias: basic and acidic residues.

Belongs to the EF-1-beta/EF-1-delta family. As to quaternary structure, EF-1 is composed of 4 subunits: alpha, beta (1B-alpha=beta'), delta (1B-beta), and gamma (1B-gamma).

EF-1-beta and EF-1-delta stimulate the exchange of GDP bound to EF-1-alpha to GTP. The polypeptide is Elongation factor 1-delta 1 (Arabidopsis thaliana (Mouse-ear cress)).